Consider the following 218-residue polypeptide: uncharacterized protein (218 aa).

5 helical membrane passes run 27-49 (IALENAGIPIPGETITLLGGFLA), 57-77 (GGVLIAAIAGAVLGDSCGYWV), 115-135 (VFFGRFVTLLRIFAGPMAGIV), 142-162 (FLLYNIGGASVWAAITVSLAY), and 180-200 (FSWFALAAVVGMVGIYFVFHF).

This sequence belongs to the DedA family.

It is found in the cell membrane. This is an uncharacterized protein from Synechocystis sp. (strain ATCC 27184 / PCC 6803 / Kazusa).